A 355-amino-acid chain; its full sequence is Cytoplasmic tRNA 2-thiolation protein 1 (355 aa).

A disordered region spans residues 320–341; that stretch reads GIGRPRGVNGDHNKETKKPGSV. Over residues 328 to 337 the composition is skewed to basic and acidic residues; that stretch reads NGDHNKETKK.

It belongs to the TtcA family. CTU1/NCS6/ATPBD3 subfamily.

It is found in the cytoplasm. Its pathway is tRNA modification; 5-methoxycarbonylmethyl-2-thiouridine-tRNA biosynthesis. Functionally, plays a central role in 2-thiolation of mcm(5)S(2)U at tRNA wobble positions of tRNA(Lys), tRNA(Glu) and tRNA(Gln). Directly binds tRNAs and probably acts by catalyzing adenylation of tRNAs, an intermediate required for 2-thiolation. It is unclear whether it acts as a sulfurtransferase that transfers sulfur from thiocarboxylated URM1 onto the uridine of tRNAs at wobble position. The protein is Cytoplasmic tRNA 2-thiolation protein 1 of Arabidopsis thaliana (Mouse-ear cress).